We begin with the raw amino-acid sequence, 598 residues long: Beta-hexosaminidase A (598 aa).

An N-terminal signal peptide occupies residues 1–11; sequence MSFITSAHATA. Asp305 is a catalytic residue.

Belongs to the glycosyl hydrolase 3 family.

The catalysed reaction is Hydrolysis of terminal non-reducing N-acetyl-D-hexosamine residues in N-acetyl-beta-D-hexosaminides.. Functionally, most active towards p-nitrophenyl-N-acetyl-beta-D-glucosaminide(PNP-beta-GlcNAc) and diacetylchitobiose. The chain is Beta-hexosaminidase A (cht60) from Pseudoalteromonas piscicida.